A 98-amino-acid chain; its full sequence is Homeobox protein SMOX-4 (98 aa).

The segment at residues Ser-37 to Asn-96 is a DNA-binding region (homeobox).

The protein localises to the nucleus. The protein is Homeobox protein SMOX-4 (SMOX-4) of Schistosoma mansoni (Blood fluke).